Consider the following 105-residue polypeptide: Large ribosomal subunit protein uL24 (105 aa).

The protein belongs to the universal ribosomal protein uL24 family. In terms of assembly, part of the 50S ribosomal subunit.

One of two assembly initiator proteins, it binds directly to the 5'-end of the 23S rRNA, where it nucleates assembly of the 50S subunit. In terms of biological role, one of the proteins that surrounds the polypeptide exit tunnel on the outside of the subunit. The chain is Large ribosomal subunit protein uL24 from Mycolicibacterium vanbaalenii (strain DSM 7251 / JCM 13017 / BCRC 16820 / KCTC 9966 / NRRL B-24157 / PYR-1) (Mycobacterium vanbaalenii).